The chain runs to 259 residues: uncharacterized protein (259 aa).

6 residues coordinate a divalent metal cation: histidine 9, histidine 11, glutamate 97, histidine 133, histidine 157, and aspartate 207.

This sequence belongs to the metallo-dependent hydrolases superfamily. TatD-type hydrolase family. It depends on a divalent metal cation as a cofactor.

This is an uncharacterized protein from Escherichia coli (strain K12).